The chain runs to 507 residues: Maturase K (507 aa).

This sequence belongs to the intron maturase 2 family. MatK subfamily.

The protein resides in the plastid. The protein localises to the chloroplast. Functionally, usually encoded in the trnK tRNA gene intron. Probably assists in splicing its own and other chloroplast group II introns. The sequence is that of Maturase K from Cupaniopsis anacardioides (Carrotwood).